The chain runs to 320 residues: Porphobilinogen deaminase (320 aa).

At Cys-248 the chain carries S-(dipyrrolylmethanemethyl)cysteine.

It belongs to the HMBS family. In terms of assembly, monomer. Requires dipyrromethane as cofactor.

The catalysed reaction is 4 porphobilinogen + H2O = hydroxymethylbilane + 4 NH4(+). Its pathway is porphyrin-containing compound metabolism; protoporphyrin-IX biosynthesis; coproporphyrinogen-III from 5-aminolevulinate: step 2/4. It functions in the pathway porphyrin-containing compound metabolism; chlorophyll biosynthesis. Its function is as follows. Tetrapolymerization of the monopyrrole PBG into the hydroxymethylbilane pre-uroporphyrinogen in several discrete steps. In Synechococcus elongatus (strain ATCC 33912 / PCC 7942 / FACHB-805) (Anacystis nidulans R2), this protein is Porphobilinogen deaminase.